A 133-amino-acid chain; its full sequence is S-adenosylmethionine decarboxylase proenzyme (133 aa).

Catalysis depends on Ser64, which acts as the Schiff-base intermediate with substrate; via pyruvic acid. Ser64 bears the Pyruvic acid (Ser); by autocatalysis mark. Catalysis depends on His69, which acts as the Proton acceptor; for processing activity. Catalysis depends on Cys84, which acts as the Proton donor; for catalytic activity.

The protein belongs to the prokaryotic AdoMetDC family. Type 1 subfamily. Heterotetramer of two alpha and two beta chains arranged as a dimer of alpha/beta heterodimers. The cofactor is pyruvate. In terms of processing, is synthesized initially as an inactive proenzyme. Formation of the active enzyme involves a self-maturation process in which the active site pyruvoyl group is generated from an internal serine residue via an autocatalytic post-translational modification. Two non-identical subunits are generated from the proenzyme in this reaction, and the pyruvate is formed at the N-terminus of the alpha chain, which is derived from the carboxyl end of the proenzyme. The post-translation cleavage follows an unusual pathway, termed non-hydrolytic serinolysis, in which the side chain hydroxyl group of the serine supplies its oxygen atom to form the C-terminus of the beta chain, while the remainder of the serine residue undergoes an oxidative deamination to produce ammonia and the pyruvoyl group blocking the N-terminus of the alpha chain.

The catalysed reaction is S-adenosyl-L-methionine + H(+) = S-adenosyl 3-(methylsulfanyl)propylamine + CO2. The protein operates within amine and polyamine biosynthesis; S-adenosylmethioninamine biosynthesis; S-adenosylmethioninamine from S-adenosyl-L-methionine: step 1/1. Catalyzes the decarboxylation of S-adenosylmethionine to S-adenosylmethioninamine (dcAdoMet), the propylamine donor required for the synthesis of the polyamines spermine and spermidine from the diamine putrescine. The sequence is that of S-adenosylmethionine decarboxylase proenzyme from Persephonella marina (strain DSM 14350 / EX-H1).